Reading from the N-terminus, the 329-residue chain is Serpentine receptor class alpha-8 (329 aa).

6 consecutive transmembrane segments (helical) span residues 26 to 46 (VDLI…KMVL), 60 to 80 (FLNI…VVVI), 141 to 161 (IFVG…TGKL), 187 to 207 (TIHF…SVAL), 231 to 251 (VIES…FMFI), and 273 to 293 (FWVV…LLLI).

This sequence belongs to the nematode receptor-like protein sra family.

It localises to the membrane. This is Serpentine receptor class alpha-8 (sra-8) from Caenorhabditis elegans.